The following is a 502-amino-acid chain: UDP-N-acetylglucosamine diphosphorylase 2 (502 aa).

Positions 130–133 (LSGG) match the Substrate binding motif. Asn-250 provides a ligand contact to substrate. A Substrate binding motif is present at residues 332-333 (EY). Lys-429 contributes to the substrate binding site.

It belongs to the UDPGP type 1 family. In terms of assembly, monomer. Requires Mg(2+) as cofactor. It depends on Mn(2+) as a cofactor. As to expression, expressed in root tips, stipules, lateral root primordia, immature anthers and at the branching points of the flowering shoots.

It is found in the cytoplasm. The catalysed reaction is N-acetyl-alpha-D-glucosamine 1-phosphate + UTP + H(+) = UDP-N-acetyl-alpha-D-glucosamine + diphosphate. It carries out the reaction N-acetyl-alpha-D-galactosamine 1-phosphate + UTP + H(+) = UDP-N-acetyl-alpha-D-galactosamine + diphosphate. The enzyme catalyses alpha-D-glucose 1-phosphate + UTP + H(+) = UDP-alpha-D-glucose + diphosphate. The protein operates within nucleotide-sugar biosynthesis; UDP-N-acetyl-alpha-D-glucosamine biosynthesis; UDP-N-acetyl-alpha-D-glucosamine from N-acetyl-alpha-D-glucosamine 1-phosphate: step 1/1. Uridylyltransferase involved in the biosynthesis of UDP-glucosamine, an essential precursor for glycoprotein and glycolipid synthesis. Can use UDP-glucosamine, the 4-epimer UDP-galactosamine and UDP-glucose as substrates. Acts redundantly with GLCNAC1PUT1. Required for gametogenesis and embryo development. The sequence is that of UDP-N-acetylglucosamine diphosphorylase 2 (GLCNAC1PUT2) from Arabidopsis thaliana (Mouse-ear cress).